The following is a 357-amino-acid chain: Thymidine kinase (357 aa).

Position 17-24 (17-24 (GAHGLGKT)) interacts with ATP. Catalysis depends on glutamate 45, which acts as the Proton acceptor. An ATP-binding site is contributed by arginine 186. Arginine 192 is a substrate binding site.

The protein belongs to the herpesviridae thymidine kinase family. In terms of assembly, homodimer.

It catalyses the reaction thymidine + ATP = dTMP + ADP + H(+). Catalyzes the transfer of the gamma-phospho group of ATP to thymidine to generate dTMP in the salvage pathway of pyrimidine synthesis. The dTMP serves as a substrate for DNA polymerase during viral DNA replication. Allows the virus to be reactivated and to grow in non-proliferative cells lacking a high concentration of phosphorylated nucleic acid precursors. The sequence is that of Thymidine kinase from Bovine herpesvirus 1 (strain 6660) (BoHV-1).